A 132-amino-acid chain; its full sequence is Small ribosomal subunit protein uS8 (132 aa).

Belongs to the universal ribosomal protein uS8 family. In terms of assembly, part of the 30S ribosomal subunit. Contacts proteins S5 and S12.

One of the primary rRNA binding proteins, it binds directly to 16S rRNA central domain where it helps coordinate assembly of the platform of the 30S subunit. This Bradyrhizobium sp. (strain ORS 278) protein is Small ribosomal subunit protein uS8.